A 176-amino-acid polypeptide reads, in one-letter code: MKPLIMLICFAVILLQLGVTKVCQHNEVQLGNECCPPCGSGQRVTKVCTDYTSVTCTPCPNGTYVSGLYNCTDCTQCNVTQVMIRNCTSTNNTVCAPKNHTYFSTPGVQHHKQRQQNHTAHITVKQGKSGRHTLAWLSLFIFLVGIILLILYLIAAYRSERCQQCCSIGKIFYRTL.

An N-terminal signal peptide occupies residues 1–20; it reads MKPLIMLICFAVILLQLGVT. TNFR-Cys repeat units lie at residues 22–56 and 58–95; these read VCQH…SVTC and PCPN…NTVC. 6 cysteine pairs are disulfide-bonded: Cys-23–Cys-34, Cys-35–Cys-48, Cys-38–Cys-56, Cys-59–Cys-71, Cys-74–Cys-87, and Cys-77–Cys-95. A helical membrane pass occupies residues 134–154; sequence LAWLSLFIFLVGIILLILYLI.

As to quaternary structure, interacts with host TRIM23; this interaction causes auto-ubiquitination of TRAF6, leading to NF-kappaB activation.

The protein localises to the membrane. Activates NF-kappaB in a tumor necrosis factor receptor (TNFR)-associated factor 6 (TRAF6)-dependent manner, causing the up-regulation of the chemokine CCL22. The protein is Membrane glycoprotein UL144 (UL144) of Homo sapiens (Human).